A 156-amino-acid polypeptide reads, in one-letter code: Myosin regulatory light chain, striated adductor muscle (156 aa).

A Blocked amino end (Ala) modification is found at Ala1. 2 consecutive EF-hand domains span residues 15 to 50 (KQIQ…LGRT) and 84 to 119 (DTEE…MGDN). Positions 28, 30, 32, and 39 each coordinate Ca(2+).

In terms of biological role, in molluscan muscle, calcium regulation is associated with myosin rather than with actin. Muscle myosin contains two types of light chains: the catalytic light chain, essential for ATPase activity, and the regulatory light chain, a calcium-binding protein responsible for Ca(2+) dependent binding and Ca(2+) dependent Mg-ATPase activity. In Mizuhopecten yessoensis (Japanese scallop), this protein is Myosin regulatory light chain, striated adductor muscle.